We begin with the raw amino-acid sequence, 525 residues long: NAD(P)H-quinone oxidoreductase chain 4-2 (525 aa).

14 helical membrane-spanning segments follow: residues 6-26 (FPWL…IPII), 36-56 (WYAL…FYTS), 91-111 (LIIL…PVTL), 115-135 (LFYF…AVQD), 137-157 (LLFF…LAIW), 169-189 (FILY…TMAF), 212-232 (LLLY…IPLH), 243-263 (TAPA…YALI), 277-297 (FAPV…LTSF), 314-334 (MGFV…GAVL), 335-355 (QMVS…ATYD), 375-397 (IFAM…GFVA), 417-437 (VIVV…LLSM), and 464-484 (VFVI…PKLL).

It belongs to the complex I subunit 4 family.

It is found in the cellular thylakoid membrane. The catalysed reaction is a plastoquinone + NADH + (n+1) H(+)(in) = a plastoquinol + NAD(+) + n H(+)(out). It catalyses the reaction a plastoquinone + NADPH + (n+1) H(+)(in) = a plastoquinol + NADP(+) + n H(+)(out). In terms of biological role, NDH-1 shuttles electrons from NAD(P)H, via FMN and iron-sulfur (Fe-S) centers, to quinones in the respiratory chain. The immediate electron acceptor for the enzyme in this species is believed to be plastoquinone. Couples the redox reaction to proton translocation (for every two electrons transferred, four hydrogen ions are translocated across the cytoplasmic membrane), and thus conserves the redox energy in a proton gradient. This chain is NAD(P)H-quinone oxidoreductase chain 4-2 (ndhD2), found in Nostoc sp. (strain PCC 7120 / SAG 25.82 / UTEX 2576).